An 812-amino-acid polypeptide reads, in one-letter code: Phospholipase D alpha 1 (812 aa).

Residues 1-46 (MAQMLLHGTLHATIFEAASLSNPHRASGSAPKFIRKFVEGIEDTVG) constitute a propeptide that is removed on maturation. The region spanning 1–130 (MAQMLLHGTL…LNGEEIDRWL (130 aa)) is the C2 domain. Aspartate 190 serves as a coordination point for Ca(2+). The 39-residue stretch at 330 to 368 (TMFTHHQKIVVVDHELPNQGSQQRRIVSFVGGLDLCDGR) folds into the PLD phosphodiesterase 1 domain. Residues histidine 335, lysine 337, and aspartate 342 contribute to the active site. Histidine 335 serves as a coordination point for a 1,2-diacyl-sn-glycero-3-phosphate. 2 residues coordinate Ca(2+): histidine 374 and histidine 408. Glutamine 524 and histidine 663 together coordinate a 1,2-diacyl-sn-glycero-3-phosphate. Residues 658 to 685 (FMIYVHTKMMIVDDEYIIIGSANINQRS) form the PLD phosphodiesterase 2 domain. Residues histidine 663, lysine 665, and aspartate 670 contribute to the active site. Glutamate 724 lines the Ca(2+) pocket.

It belongs to the phospholipase D family. C2-PLD subfamily. As to quaternary structure, monomer. The cofactor is Ca(2+). In terms of tissue distribution, expressed in leaves, roots, developing seeds and cultured cells.

It carries out the reaction a 1,2-diacyl-sn-glycero-3-phosphocholine + H2O = a 1,2-diacyl-sn-glycero-3-phosphate + choline + H(+). In terms of biological role, hydrolyzes glycerol-phospholipids at the terminal phosphodiesteric bond. Plays an important role in various cellular processes. The polypeptide is Phospholipase D alpha 1 (PLD1) (Oryza sativa subsp. japonica (Rice)).